A 145-amino-acid chain; its full sequence is D-aminoacyl-tRNA deacylase (145 aa).

The short motif at 137-138 (GP) is the Gly-cisPro motif, important for rejection of L-amino acids element.

It belongs to the DTD family. As to quaternary structure, homodimer.

The protein localises to the cytoplasm. The catalysed reaction is glycyl-tRNA(Ala) + H2O = tRNA(Ala) + glycine + H(+). The enzyme catalyses a D-aminoacyl-tRNA + H2O = a tRNA + a D-alpha-amino acid + H(+). In terms of biological role, an aminoacyl-tRNA editing enzyme that deacylates mischarged D-aminoacyl-tRNAs. Also deacylates mischarged glycyl-tRNA(Ala), protecting cells against glycine mischarging by AlaRS. Acts via tRNA-based rather than protein-based catalysis; rejects L-amino acids rather than detecting D-amino acids in the active site. By recycling D-aminoacyl-tRNA to D-amino acids and free tRNA molecules, this enzyme counteracts the toxicity associated with the formation of D-aminoacyl-tRNA entities in vivo and helps enforce protein L-homochirality. In Dinoroseobacter shibae (strain DSM 16493 / NCIMB 14021 / DFL 12), this protein is D-aminoacyl-tRNA deacylase.